A 384-amino-acid chain; its full sequence is 1-deoxy-D-xylulose 5-phosphate reductoisomerase (384 aa).

Residues threonine 10, glycine 11, serine 12, isoleucine 13, arginine 37, asparagine 38, and asparagine 124 each coordinate NADPH. Residue lysine 125 participates in 1-deoxy-D-xylulose 5-phosphate binding. Glutamate 126 contacts NADPH. Aspartate 150 contacts Mn(2+). Serine 151, glutamate 152, serine 176, and histidine 199 together coordinate 1-deoxy-D-xylulose 5-phosphate. A Mn(2+)-binding site is contributed by glutamate 152. Residue glycine 205 participates in NADPH binding. 1-deoxy-D-xylulose 5-phosphate contacts are provided by serine 212, asparagine 217, lysine 218, and glutamate 221. Position 221 (glutamate 221) interacts with Mn(2+).

It belongs to the DXR family. Mg(2+) is required as a cofactor. Mn(2+) serves as cofactor.

The catalysed reaction is 2-C-methyl-D-erythritol 4-phosphate + NADP(+) = 1-deoxy-D-xylulose 5-phosphate + NADPH + H(+). It functions in the pathway isoprenoid biosynthesis; isopentenyl diphosphate biosynthesis via DXP pathway; isopentenyl diphosphate from 1-deoxy-D-xylulose 5-phosphate: step 1/6. In terms of biological role, catalyzes the NADPH-dependent rearrangement and reduction of 1-deoxy-D-xylulose-5-phosphate (DXP) to 2-C-methyl-D-erythritol 4-phosphate (MEP). This chain is 1-deoxy-D-xylulose 5-phosphate reductoisomerase, found in Clostridium perfringens (strain ATCC 13124 / DSM 756 / JCM 1290 / NCIMB 6125 / NCTC 8237 / Type A).